The primary structure comprises 166 residues: Large ribosomal subunit protein uL10 (166 aa).

It belongs to the universal ribosomal protein uL10 family. In terms of assembly, part of the ribosomal stalk of the 50S ribosomal subunit. The N-terminus interacts with L11 and the large rRNA to form the base of the stalk. The C-terminus forms an elongated spine to which L12 dimers bind in a sequential fashion forming a multimeric L10(L12)X complex.

In terms of biological role, forms part of the ribosomal stalk, playing a central role in the interaction of the ribosome with GTP-bound translation factors. In Alkaliphilus metalliredigens (strain QYMF), this protein is Large ribosomal subunit protein uL10.